The following is a 126-amino-acid chain: Aspartate 1-decarboxylase (126 aa).

The active-site Schiff-base intermediate with substrate; via pyruvic acid is the Ser25. Position 25 is a pyruvic acid (Ser) (Ser25). Substrate is bound at residue Thr57. Residue Tyr58 is the Proton donor of the active site. Position 73 to 75 (73 to 75 (GAA)) interacts with substrate.

Belongs to the PanD family. Heterooctamer of four alpha and four beta subunits. Pyruvate is required as a cofactor. In terms of processing, is synthesized initially as an inactive proenzyme, which is activated by self-cleavage at a specific serine bond to produce a beta-subunit with a hydroxyl group at its C-terminus and an alpha-subunit with a pyruvoyl group at its N-terminus.

Its subcellular location is the cytoplasm. The catalysed reaction is L-aspartate + H(+) = beta-alanine + CO2. The protein operates within cofactor biosynthesis; (R)-pantothenate biosynthesis; beta-alanine from L-aspartate: step 1/1. Its function is as follows. Catalyzes the pyruvoyl-dependent decarboxylation of aspartate to produce beta-alanine. This chain is Aspartate 1-decarboxylase, found in Pectobacterium carotovorum subsp. carotovorum (strain PC1).